A 231-amino-acid polypeptide reads, in one-letter code: Putative N-acetylmannosamine-6-phosphate 2-epimerase (231 aa).

The protein belongs to the NanE family.

The catalysed reaction is an N-acyl-D-glucosamine 6-phosphate = an N-acyl-D-mannosamine 6-phosphate. It participates in amino-sugar metabolism; N-acetylneuraminate degradation; D-fructose 6-phosphate from N-acetylneuraminate: step 3/5. Functionally, converts N-acetylmannosamine-6-phosphate (ManNAc-6-P) to N-acetylglucosamine-6-phosphate (GlcNAc-6-P). The chain is Putative N-acetylmannosamine-6-phosphate 2-epimerase from Listeria monocytogenes serotype 4b (strain CLIP80459).